The primary structure comprises 295 residues: Ankyrin repeat and SOCS box protein 17 (295 aa).

The ANK repeat unit spans residues 146–176; it reads SGITPLLYVAQTRQSNILKILLQYGILEREN. The region spanning 232–295 is the SOCS box domain; that stretch reads LGRRPIISNW…CLQNYLNLES (64 aa).

This sequence belongs to the ankyrin SOCS box (ASB) family.

Its pathway is protein modification; protein ubiquitination. Functionally, may be a substrate-recognition component of a SCF-like ECS (Elongin-Cullin-SOCS-box protein) E3 ubiquitin-protein ligase complex which mediates the ubiquitination and subsequent proteasomal degradation of target proteins. The sequence is that of Ankyrin repeat and SOCS box protein 17 (ASB17) from Bos taurus (Bovine).